We begin with the raw amino-acid sequence, 489 residues long: Betaine aldehyde dehydrogenase (489 aa).

Residues T26 and D93 each coordinate K(+). Position 150-152 (150-152) interacts with NAD(+); it reads GAW. K162 acts as the Charge relay system in catalysis. 176 to 179 provides a ligand contact to NAD(+); it reads KPSE. Position 180 (V180) interacts with K(+). 229–232 contacts NAD(+); it reads GVET. L245 contacts K(+). Catalysis depends on E251, which acts as the Proton acceptor. NAD(+) contacts are provided by G253, C285, and E386. The active-site Nucleophile is the C285. At C285 the chain carries Cysteine sulfenic acid (-SOH). Residues K456 and G459 each coordinate K(+). E463 functions as the Charge relay system in the catalytic mechanism.

It belongs to the aldehyde dehydrogenase family. In terms of assembly, dimer of dimers. It depends on K(+) as a cofactor.

It carries out the reaction betaine aldehyde + NAD(+) + H2O = glycine betaine + NADH + 2 H(+). The protein operates within amine and polyamine biosynthesis; betaine biosynthesis via choline pathway; betaine from betaine aldehyde: step 1/1. Functionally, involved in the biosynthesis of the osmoprotectant glycine betaine. Catalyzes the irreversible oxidation of betaine aldehyde to the corresponding acid. This Burkholderia ambifaria (strain MC40-6) protein is Betaine aldehyde dehydrogenase.